Consider the following 78-residue polypeptide: Conotoxin 5 (78 aa).

An N-terminal signal peptide occupies residues 1 to 22 (MKLTCMMIVTVLFLTAWIFITA). Positions 23 to 49 (DNSRNGIENLPRMRRHEMKNPKASKLN) are excised as a propeptide. Cystine bridges form between cysteine 53/cysteine 69, cysteine 60/cysteine 73, and cysteine 68/cysteine 77.

It belongs to the conotoxin O1 superfamily. Expressed by the venom duct.

The protein localises to the secreted. The protein is Conotoxin 5 of Conus imperialis (Imperial cone).